Consider the following 480-residue polypeptide: Glutamyl-tRNA(Gln) amidotransferase subunit A (480 aa).

Residues lysine 79 and serine 154 each act as charge relay system in the active site. Positions 133 to 156 are disordered; that stretch reads NENSAYGPVRNPRDKSRVPGGSSG. Residue serine 178 is the Acyl-ester intermediate of the active site.

It belongs to the amidase family. GatA subfamily. As to quaternary structure, heterotrimer of A, B and C subunits.

The enzyme catalyses L-glutamyl-tRNA(Gln) + L-glutamine + ATP + H2O = L-glutaminyl-tRNA(Gln) + L-glutamate + ADP + phosphate + H(+). Functionally, allows the formation of correctly charged Gln-tRNA(Gln) through the transamidation of misacylated Glu-tRNA(Gln) in organisms which lack glutaminyl-tRNA synthetase. The reaction takes place in the presence of glutamine and ATP through an activated gamma-phospho-Glu-tRNA(Gln). This chain is Glutamyl-tRNA(Gln) amidotransferase subunit A, found in Koribacter versatilis (strain Ellin345).